A 155-amino-acid chain; its full sequence is Small ribosomal subunit protein uS7 (155 aa).

This sequence belongs to the universal ribosomal protein uS7 family. As to quaternary structure, part of the 30S ribosomal subunit. Contacts proteins S9 and S11.

Its function is as follows. One of the primary rRNA binding proteins, it binds directly to 16S rRNA where it nucleates assembly of the head domain of the 30S subunit. Is located at the subunit interface close to the decoding center, probably blocks exit of the E-site tRNA. The sequence is that of Small ribosomal subunit protein uS7 from Corynebacterium aurimucosum (strain ATCC 700975 / DSM 44827 / CIP 107346 / CN-1) (Corynebacterium nigricans).